Consider the following 447-residue polypeptide: Phosphoglucosamine mutase (447 aa).

Ser88 acts as the Phosphoserine intermediate in catalysis. Residues Ser88, Asp231, Asp233, and Asp235 each coordinate Mg(2+). Residue Ser88 is modified to Phosphoserine.

The protein belongs to the phosphohexose mutase family. Requires Mg(2+) as cofactor. Post-translationally, activated by phosphorylation.

The enzyme catalyses alpha-D-glucosamine 1-phosphate = D-glucosamine 6-phosphate. In terms of biological role, catalyzes the conversion of glucosamine-6-phosphate to glucosamine-1-phosphate. In Methanococcus maripaludis (strain C7 / ATCC BAA-1331), this protein is Phosphoglucosamine mutase.